The sequence spans 320 residues: MENRKTFSWLKEQMIRSISVSIMIYVITRTSISNAYPIFAQQGYENPREATGRIVCANCHLANKPVDIEVPQAVLPDTVFEAVLRIPYDMQLKQVLANGKKGGLNVGAVLILPEGFELAPPDRISPELKEKIGNLSFQSYRPNKKNILVIGPVPGKKYSEIVFPILSPDPATKKDVHFLKYPIYVGGNRGRGQIYPDGTKSNNTVYNATSTGIVKKILRKEKGGYEISIVDASDGRQVIDIIPPGPELLVSEGESIKLDQPLTSNPNVGGFGQGDAEIVLQDPLRVQGLLFFFASVILAQVFLVLKKKQFEKVQLYEMNF.

Residues 1-35 form the signal peptide; it reads MENRKTFSWLKEQMIRSISVSIMIYVITRTSISNA. Residues Y36, C56, C59, and H60 each contribute to the heme site. Residues 286–306 form a helical membrane-spanning segment; it reads VQGLLFFFASVILAQVFLVLK.

It belongs to the cytochrome f family. As to quaternary structure, the 4 large subunits of the cytochrome b6-f complex are cytochrome b6, subunit IV (17 kDa polypeptide, petD), cytochrome f and the Rieske protein, while the 4 small subunits are PetG, PetL, PetM and PetN. The complex functions as a dimer. Heme is required as a cofactor.

The protein resides in the plastid. Its subcellular location is the chloroplast thylakoid membrane. Component of the cytochrome b6-f complex, which mediates electron transfer between photosystem II (PSII) and photosystem I (PSI), cyclic electron flow around PSI, and state transitions. The polypeptide is Cytochrome f (Saccharum hybrid (Sugarcane)).